We begin with the raw amino-acid sequence, 431 residues long: O-Mevalon transferase macI (431 aa).

N-linked (GlcNAc...) asparagine glycosylation is present at N176. 4 consecutive transmembrane segments (helical) span residues 198-218, 301-321, 336-356, and 404-424; these read IYAL…AILM, LLMM…YQVT, YFAL…VLGI, and LFAA…NFVA.

The protein belongs to the wax synthase family.

It is found in the membrane. It functions in the pathway secondary metabolite biosynthesis; terpenoid biosynthesis. Functionally, O-Mevalon transferase; part of the gene cluster that mediates the biosynthesis of macrophorins, isoprenoid epoxycyclohexenones containing cyclized drimane moieties. The first step of the pathway is the synthesis of 6-methylsalicylic acid (6-MSA) by the polyketide synthase macA. 6-MSA is then converted to m-cresol by the decarboxylase macB. The cytochrome P450 monooxygenase macC then catalyzes the oxidation of m-cresol to toluquinol. Epoxidation of toluquinol is then performed by the short chain dehydrogenase macD, with the help of macE, and a further prenylation by macG leads to 7-deacetoxyyanuthone A. The next step is the hydroxylation of C-22 of 7-deacetoxyyanuthone A by the cytochrome P450 monooxygenase macH to yield 22-deacetylyanuthone A. O-Mevalon transferase macI then attaches mevalon to the hydroxyl group of 22-deacetylyanuthone A to produce yanuthone E. The terpene cyclase macJ catalyzes the cyclization of 22-deacetylyanuthone A to macrophorin A. MacJ is also able to catalyze cyclization of yanuthone E and 7-deacetoxyyanuthone A to their corresponding macrophorins. The macJ products can be further modified by macH and macJ, as well as by the FAD-dependent monooxygenase macF, to produce additional macrophorins, including 4'-oxomacrophorin A, 4'-oxomacrophorin D and 4'-oxomacrophorin E. This is O-Mevalon transferase macI from Penicillium terrestre.